A 121-amino-acid polypeptide reads, in one-letter code: Large ribosomal subunit protein uL14 (121 aa).

It belongs to the universal ribosomal protein uL14 family. In terms of assembly, part of the 50S ribosomal subunit. Forms a cluster with proteins L3 and L19. In the 70S ribosome, L14 and L19 interact and together make contacts with the 16S rRNA in bridges B5 and B8.

Its function is as follows. Binds to 23S rRNA. Forms part of two intersubunit bridges in the 70S ribosome. The chain is Large ribosomal subunit protein uL14 from Synechococcus elongatus (strain ATCC 33912 / PCC 7942 / FACHB-805) (Anacystis nidulans R2).